Reading from the N-terminus, the 143-residue chain is UPF0102 protein Acid345_3985 (143 aa).

Belongs to the UPF0102 family.

This is UPF0102 protein Acid345_3985 from Koribacter versatilis (strain Ellin345).